Reading from the N-terminus, the 178-residue chain is Phosphopantetheine adenylyltransferase (178 aa).

Ser8 is a binding site for substrate. ATP-binding positions include 8-9 (SF) and His16. Lys40, Thr72, and Arg86 together coordinate substrate. ATP contacts are provided by residues 87 to 89 (GLR), Glu97, and 122 to 128 (YSFLSSS).

This sequence belongs to the bacterial CoaD family. Homohexamer. It depends on Mg(2+) as a cofactor.

It is found in the cytoplasm. The enzyme catalyses (R)-4'-phosphopantetheine + ATP + H(+) = 3'-dephospho-CoA + diphosphate. It participates in cofactor biosynthesis; coenzyme A biosynthesis; CoA from (R)-pantothenate: step 4/5. In terms of biological role, reversibly transfers an adenylyl group from ATP to 4'-phosphopantetheine, yielding dephospho-CoA (dPCoA) and pyrophosphate. This Picosynechococcus sp. (strain ATCC 27264 / PCC 7002 / PR-6) (Agmenellum quadruplicatum) protein is Phosphopantetheine adenylyltransferase.